Consider the following 1040-residue polypeptide: Multidrug resistance protein MdtB (1040 aa).

Transmembrane regions (helical) follow at residues F16–I36, D342–L362, I369–L389, L396–I416, I440–F460, F472–P492, W537–I557, L869–I889, H890–M910, L911–V931, I968–V988, and I998–I1018.

It belongs to the resistance-nodulation-cell division (RND) (TC 2.A.6) family. MdtB subfamily. In terms of assembly, part of a tripartite efflux system composed of MdtA, MdtB and MdtC. MdtB forms a heteromultimer with MdtC.

It is found in the cell inner membrane. The protein is Multidrug resistance protein MdtB of Enterobacter sp. (strain 638).